Consider the following 294-residue polypeptide: 33 kDa chaperonin (294 aa).

2 disulfide bridges follow: Cys-239–Cys-241 and Cys-272–Cys-275.

This sequence belongs to the HSP33 family. Post-translationally, under oxidizing conditions two disulfide bonds are formed involving the reactive cysteines. Under reducing conditions zinc is bound to the reactive cysteines and the protein is inactive.

It is found in the cytoplasm. Its function is as follows. Redox regulated molecular chaperone. Protects both thermally unfolding and oxidatively damaged proteins from irreversible aggregation. Plays an important role in the bacterial defense system toward oxidative stress. The sequence is that of 33 kDa chaperonin from Lacticaseibacillus casei (strain BL23) (Lactobacillus casei).